The following is a 404-amino-acid chain: Phosphopentomutase (404 aa).

Positions 10, 303, 308, 344, 345, and 356 each coordinate Mn(2+).

This sequence belongs to the phosphopentomutase family. Requires Mn(2+) as cofactor.

The protein localises to the cytoplasm. The enzyme catalyses 2-deoxy-alpha-D-ribose 1-phosphate = 2-deoxy-D-ribose 5-phosphate. The catalysed reaction is alpha-D-ribose 1-phosphate = D-ribose 5-phosphate. It functions in the pathway carbohydrate degradation; 2-deoxy-D-ribose 1-phosphate degradation; D-glyceraldehyde 3-phosphate and acetaldehyde from 2-deoxy-alpha-D-ribose 1-phosphate: step 1/2. In terms of biological role, isomerase that catalyzes the conversion of deoxy-ribose 1-phosphate (dRib-1-P) and ribose 1-phosphate (Rib-1-P) to deoxy-ribose 5-phosphate (dRib-5-P) and ribose 5-phosphate (Rib-5-P), respectively. The chain is Phosphopentomutase from Shewanella sp. (strain ANA-3).